The chain runs to 440 residues: Actin-like protein 7A (440 aa).

Residues 1 to 29 (MSLDGVWAPQTANIGDGPAKKASDQASMQ) are disordered. The tract at residues 36–56 (ASLKDGPAKRAVWVRRDNAET) is required for interaction with TES.

The protein belongs to the actin family. As to quaternary structure, interacts (via N-terminus) with TES (via LIM domain 2). Heterodimer with TES; the heterodimer interacts with ENAH to form a heterotrimer. Interacts with ACTL9. Interacts with CYLC1; the interaction may be relevant for proper acrosome attachment to the nuclear envelope. As to expression, detected in testis. Detected at the acrosome of round spermatids (at protein level). Detected in adult and embryonic testis. Detected in developing male germ cells.

It is found in the cytoplasm. It localises to the cytoskeleton. Its subcellular location is the golgi apparatus. The protein localises to the nucleus. The protein resides in the cytoplasmic vesicle. It is found in the secretory vesicle. It localises to the acrosome. Essential for normal spermatogenesis and male fertility. Required for normal sperm head morphology, acroplaxome formation, acrosome attachment, and acrosome granule stability. May anchor and stabilize acrosomal adherence to the acroplaxome at least in part by facilitating the presence of F-actin in the subacrosomal space. May play an important role in formation and fusion of Golgi-derived vesicles during acrosome biogenesis. The polypeptide is Actin-like protein 7A (Actl7a) (Mus musculus (Mouse)).